A 258-amino-acid polypeptide reads, in one-letter code: Tryptophan synthase alpha chain (258 aa).

Residues glutamate 47 and aspartate 58 each act as proton acceptor in the active site.

Belongs to the TrpA family. Tetramer of two alpha and two beta chains.

The catalysed reaction is (1S,2R)-1-C-(indol-3-yl)glycerol 3-phosphate + L-serine = D-glyceraldehyde 3-phosphate + L-tryptophan + H2O. It participates in amino-acid biosynthesis; L-tryptophan biosynthesis; L-tryptophan from chorismate: step 5/5. Functionally, the alpha subunit is responsible for the aldol cleavage of indoleglycerol phosphate to indole and glyceraldehyde 3-phosphate. The chain is Tryptophan synthase alpha chain from Bacillus anthracis (strain CDC 684 / NRRL 3495).